We begin with the raw amino-acid sequence, 252 residues long: tRNA pseudouridine synthase A (252 aa).

Aspartate 52 functions as the Nucleophile in the catalytic mechanism. Tyrosine 110 contributes to the substrate binding site.

It belongs to the tRNA pseudouridine synthase TruA family. As to quaternary structure, homodimer.

The enzyme catalyses uridine(38/39/40) in tRNA = pseudouridine(38/39/40) in tRNA. In terms of biological role, formation of pseudouridine at positions 38, 39 and 40 in the anticodon stem and loop of transfer RNAs. The polypeptide is tRNA pseudouridine synthase A (Blochmanniella floridana).